A 253-amino-acid polypeptide reads, in one-letter code: 5'-nucleotidase SurE (253 aa).

Residues D8, D9, S40, and N93 each contribute to the a divalent metal cation site.

This sequence belongs to the SurE nucleotidase family. Requires a divalent metal cation as cofactor.

Its subcellular location is the cytoplasm. It catalyses the reaction a ribonucleoside 5'-phosphate + H2O = a ribonucleoside + phosphate. Its function is as follows. Nucleotidase that shows phosphatase activity on nucleoside 5'-monophosphates. This is 5'-nucleotidase SurE from Methylobacterium nodulans (strain LMG 21967 / CNCM I-2342 / ORS 2060).